We begin with the raw amino-acid sequence, 269 residues long: Hydroxyethylthiazole kinase (269 aa).

Met-45 is a binding site for substrate. ATP is bound by residues Arg-121 and Thr-167. Position 194 (Gly-194) interacts with substrate.

This sequence belongs to the Thz kinase family. Requires Mg(2+) as cofactor.

It catalyses the reaction 5-(2-hydroxyethyl)-4-methylthiazole + ATP = 4-methyl-5-(2-phosphooxyethyl)-thiazole + ADP + H(+). It functions in the pathway cofactor biosynthesis; thiamine diphosphate biosynthesis; 4-methyl-5-(2-phosphoethyl)-thiazole from 5-(2-hydroxyethyl)-4-methylthiazole: step 1/1. Its function is as follows. Catalyzes the phosphorylation of the hydroxyl group of 4-methyl-5-beta-hydroxyethylthiazole (THZ). This Brevibacillus brevis (strain 47 / JCM 6285 / NBRC 100599) protein is Hydroxyethylthiazole kinase.